We begin with the raw amino-acid sequence, 465 residues long: MFPNSPDAFHQVRMMQSSIKASNFKLQSMEFRCHSNNVCEYQMEMLHHLLSVEAKTLPSLSLIEQQPEIKLGMRPLLLDFLMEVITILNLSRSTFPLTVNLIDRYCSTRIVKKQHYQLLGLTSLWISCKNLDSKFKVPTLNDLRKICVDSYYKELFVEMEKHILKSLEWVVNAPTFDAFIDLYSNLLISNSSNFEVANIIKKSSHKIKLFSNYIGELFQFYPNIYYDYTSSQIALIAILITVLTLKIPVDLISLLNFYNGLVKTEMFKSNVEQGAEDQFEEILSVDSFKSLFNKSFFKNLIKIIDNPPSSLKIKYFAENGKYSVLMKQLVTTASNTLKCILDPVPTTPKANSFVKHQQQQHHYHPRPPMSINTSMIPLTPVSNSTSPNRFSPDQIFSENESTPGIAFGTMTPDSQSTSPGEKRSYECIDELEIGTSTIAGYTLKNHDTLKRSKSANYGTLFYLQQ.

It belongs to the cyclin family.

Its function is as follows. Essential for the control of the cell cycle at the G1/S (start) transition. Interacts with the CDC28 protein kinase to form MPF. This is G1/S-specific cyclin CLN2 (CLN2) from Candida albicans (Yeast).